Here is a 422-residue protein sequence, read N- to C-terminus: 5-methylthioadenosine/S-adenosylhomocysteine deaminase 1 (422 aa).

The Zn(2+) site is built by H56 and H58. Residues E85 and H174 each coordinate substrate. H201 contacts Zn(2+). Substrate contacts are provided by E204 and D290. Residue D290 coordinates Zn(2+).

This sequence belongs to the metallo-dependent hydrolases superfamily. MTA/SAH deaminase family. Zn(2+) serves as cofactor.

It carries out the reaction S-adenosyl-L-homocysteine + H2O + H(+) = S-inosyl-L-homocysteine + NH4(+). The enzyme catalyses S-methyl-5'-thioadenosine + H2O + H(+) = S-methyl-5'-thioinosine + NH4(+). In terms of biological role, catalyzes the deamination of 5-methylthioadenosine and S-adenosyl-L-homocysteine into 5-methylthioinosine and S-inosyl-L-homocysteine, respectively. Is also able to deaminate adenosine. This Archaeoglobus fulgidus (strain ATCC 49558 / DSM 4304 / JCM 9628 / NBRC 100126 / VC-16) protein is 5-methylthioadenosine/S-adenosylhomocysteine deaminase 1.